We begin with the raw amino-acid sequence, 552 residues long: Arginine--tRNA ligase (552 aa).

The 'HIGH' region signature appears at 123-133; it reads ANPTGPLTIGR.

This sequence belongs to the class-I aminoacyl-tRNA synthetase family. As to quaternary structure, monomer.

It localises to the cytoplasm. The catalysed reaction is tRNA(Arg) + L-arginine + ATP = L-arginyl-tRNA(Arg) + AMP + diphosphate. This chain is Arginine--tRNA ligase, found in Chlorobium luteolum (strain DSM 273 / BCRC 81028 / 2530) (Pelodictyon luteolum).